Consider the following 513-residue polypeptide: Probable vesicular acetylcholine transporter-A (513 aa).

The Cytoplasmic segment spans residues 1-39 (MATEESGGLAQTAAVKLSEMGERTKQLGNAIQDPERQRR). Residues 40–60 (IILVIVCVALLLDNMLYMVIV) traverse the membrane as a helical segment. The Lumenal, vesicle segment spans residues 61–98 (PIVPDYLAHLESESEQAHVKGNSSINITQNENFDLQIG). N-linked (GlcNAc...) asparagine glycosylation is found at N82 and N86. A helical transmembrane segment spans residues 99-119 (VLFASKAILQLLVNPLTGTFI). Topologically, residues 120–125 (DRVGYD) are cytoplasmic. The helical transmembrane segment at 126–146 (IPLLIGLSIMFVSTCIFAFAE) threads the bilayer. Topologically, residues 147 to 156 (NYATLFMARS) are lumenal, vesicle. The helical transmembrane segment at 157–174 (LQGLGSAFADTSGIAMIA) threads the bilayer. Topologically, residues 175–186 (DKYAEESERSRA) are cytoplasmic. The helical transmembrane segment at 187-207 (LGIALAFISFGSLAAPPFGGV) threads the bilayer. The Lumenal, vesicle segment spans residues 208-215 (LYEFAGKR). A helical transmembrane segment spans residues 216 to 236 (FPFIALACVCLADGILCLTVL). Topologically, residues 237-257 (KPFSSRTRENMPVGTPIYKLM) are cytoplasmic. Residues 258–278 (IDPYIAVVAGALTTCNIPLAF) form a helical membrane-spanning segment. At 279–296 (LEPTIANWMEETMNASQW) the chain is on the lumenal, vesicle side. N-linked (GlcNAc...) asparagine glycosylation occurs at N292. Residues 297–317 (QIGITWLPAFFPHILGVYLTV) form a helical membrane-spanning segment. Residues 318–327 (KLAAKYPHLQ) are Cytoplasmic-facing. The helical transmembrane segment at 328-348 (WFYGALGMVIIGASSCIVPAC) threads the bilayer. The Lumenal, vesicle segment spans residues 349-353 (KNFEQ). Residues 354 to 374 (LIIPLCGVCFGIALVDTALLP) traverse the membrane as a helical segment. Topologically, residues 375–390 (TLAFLVDVRHVSVYGS) are cytoplasmic. A helical membrane pass occupies residues 391-411 (VYAIADISYCVAYALGPIVAG). At 412-418 (KIVHDLG) the chain is on the lumenal, vesicle side. A helical transmembrane segment spans residues 419 to 439 (FVQLNLGMGLANVLYAPALLL). The Cytoplasmic segment spans residues 440–513 (LRNVSLMKPS…EEETSEPEYI (74 aa)). Residues 475-513 (RKKHGYSSSGNCVPIDENGTFAGQSKSFSEEETSEPEYI) are disordered. The span at 504–513 (EEETSEPEYI) shows a compositional bias: acidic residues.

Belongs to the major facilitator superfamily. Vesicular transporter family.

It is found in the membrane. Its function is as follows. Involved in acetylcholine transport into synaptic vesicles. The sequence is that of Probable vesicular acetylcholine transporter-A from Danio rerio (Zebrafish).